Consider the following 194-residue polypeptide: Protein phosphatase 1 regulatory subunit 1B (194 aa).

An N-acetylmethionine modification is found at Met1. The tract at residues 1-194 (MDPKDRKKIQ…GEEPQHPSPP (194 aa)) is disordered. Thr34 bears the Phosphothreonine; by PKA mark. A compositionally biased stretch (basic and acidic residues) spans 41 to 63 (VSEHSSPEEEASPHQRTSGEGHH). Phosphoserine is present on residues Ser45 and Ser46. Thr75 carries the post-translational modification Phosphothreonine. Residues 84 to 95 (HLQTISNLSENQ) show a composition bias toward polar residues. A phosphoserine mark is found at Ser97 and Ser130. Residues 113–131 (QEDDEEDEDEEEDEEEDSQ) are compositionally biased toward acidic residues. Positions 160–170 (PPLDEPQRDGN) are enriched in basic and acidic residues. The residue at position 192 (Ser192) is a Phosphoserine.

This sequence belongs to the protein phosphatase inhibitor 1 family. In terms of processing, dopamine- and cyclic AMP-regulated neuronal phosphoprotein. Phosphorylation of Thr-34 is required for activity.

Its subcellular location is the cytoplasm. Inhibitor of protein-phosphatase 1. This is Protein phosphatase 1 regulatory subunit 1B (Ppp1r1b) from Mus musculus (Mouse).